The sequence spans 209 residues: MQGVTIVDHPLVRHKLTRMRDKQTSTKTFRALMRETATLLCYEVTRALPTHTVEIETPVGPTKAEEISGKKMVFAPILRAGLGMAEGMLDLVPSARVAHIGLFRDPVSLEAVEYYYKTPDDIADRLVIVVDPMLATGHTAVAAIARLKRSGVTDLRFVCLVASVQGVETLRAAHPDVPIWTAAVDAELNDHGYIVPGLGDAGDRTFGTR.

5-phospho-alpha-D-ribose 1-diphosphate-binding positions include R79, R104, and 131-139 (DPMLATGHT). Uracil contacts are provided by residues I194 and 199–201 (GDA). Position 200 (D200) interacts with 5-phospho-alpha-D-ribose 1-diphosphate.

This sequence belongs to the UPRTase family. Requires Mg(2+) as cofactor.

The catalysed reaction is UMP + diphosphate = 5-phospho-alpha-D-ribose 1-diphosphate + uracil. The protein operates within pyrimidine metabolism; UMP biosynthesis via salvage pathway; UMP from uracil: step 1/1. With respect to regulation, allosterically activated by GTP. In terms of biological role, catalyzes the conversion of uracil and 5-phospho-alpha-D-ribose 1-diphosphate (PRPP) to UMP and diphosphate. The sequence is that of Uracil phosphoribosyltransferase from Caulobacter sp. (strain K31).